Here is a 173-residue protein sequence, read N- to C-terminus: Co-chaperone protein HscB homolog (173 aa).

The region spanning 5 to 77 is the J domain; it reads CHFALFELQP…AQRARYLLTI (73 aa).

The protein belongs to the HscB family. In terms of assembly, interacts with HscA and stimulates its ATPase activity.

Its function is as follows. Co-chaperone involved in the maturation of iron-sulfur cluster-containing proteins. Seems to help targeting proteins to be folded toward HscA. The chain is Co-chaperone protein HscB homolog from Pseudomonas fluorescens (strain Pf0-1).